The chain runs to 78 residues: Chassatide C4 (78 aa).

Residues 1–23 form the signal peptide; sequence MAKFATQLFLLTASVVMLEVQSS. The propeptide at 24 to 42 is removed in mature form; that stretch reads IVIMQDPDLGRKLIMNPAN. Positions 43-71 form a cross-link, cyclopeptide (Gly-Asn); that stretch reads GASCGETCFTGICFTAGCSCNPWPTCTRN. Disulfide bonds link Cys46/Cys60, Cys50/Cys62, and Cys55/Cys68. A propeptide spans 72–78 (removed in mature form); that stretch reads GLNPESI.

Post-translationally, this is a cyclic peptide.

Its function is as follows. Probably participates in a plant defense mechanism. This Chassalia chartacea (Chassalia curviflora) protein is Chassatide C4.